Here is a 283-residue protein sequence, read N- to C-terminus: Bifunctional protein FolD (283 aa).

Residues 165 to 167 (GRG), T192, and V233 contribute to the NADP(+) site.

This sequence belongs to the tetrahydrofolate dehydrogenase/cyclohydrolase family. As to quaternary structure, homodimer.

The catalysed reaction is (6R)-5,10-methylene-5,6,7,8-tetrahydrofolate + NADP(+) = (6R)-5,10-methenyltetrahydrofolate + NADPH. The enzyme catalyses (6R)-5,10-methenyltetrahydrofolate + H2O = (6R)-10-formyltetrahydrofolate + H(+). It functions in the pathway one-carbon metabolism; tetrahydrofolate interconversion. Functionally, catalyzes the oxidation of 5,10-methylenetetrahydrofolate to 5,10-methenyltetrahydrofolate and then the hydrolysis of 5,10-methenyltetrahydrofolate to 10-formyltetrahydrofolate. This Mycolicibacterium smegmatis (strain ATCC 700084 / mc(2)155) (Mycobacterium smegmatis) protein is Bifunctional protein FolD.